The sequence spans 275 residues: 2,3,4,5-tetrahydropyridine-2,6-dicarboxylate N-succinyltransferase (275 aa).

This sequence belongs to the transferase hexapeptide repeat family.

Its subcellular location is the cytoplasm. The catalysed reaction is (S)-2,3,4,5-tetrahydrodipicolinate + succinyl-CoA + H2O = (S)-2-succinylamino-6-oxoheptanedioate + CoA. It functions in the pathway amino-acid biosynthesis; L-lysine biosynthesis via DAP pathway; LL-2,6-diaminopimelate from (S)-tetrahydrodipicolinate (succinylase route): step 1/3. The protein is 2,3,4,5-tetrahydropyridine-2,6-dicarboxylate N-succinyltransferase of Paraburkholderia phymatum (strain DSM 17167 / CIP 108236 / LMG 21445 / STM815) (Burkholderia phymatum).